A 364-amino-acid chain; its full sequence is D-alanine--D-alanine ligase (364 aa).

The ATP-grasp domain occupies lysine 146–leucine 352. Threonine 179 to glutamate 234 serves as a coordination point for ATP. Mg(2+) contacts are provided by aspartate 305, glutamate 319, and asparagine 321.

This sequence belongs to the D-alanine--D-alanine ligase family. Mg(2+) is required as a cofactor. Mn(2+) serves as cofactor.

Its subcellular location is the cytoplasm. It carries out the reaction 2 D-alanine + ATP = D-alanyl-D-alanine + ADP + phosphate + H(+). It participates in cell wall biogenesis; peptidoglycan biosynthesis. Functionally, cell wall formation. The sequence is that of D-alanine--D-alanine ligase from Chlorobaculum tepidum (strain ATCC 49652 / DSM 12025 / NBRC 103806 / TLS) (Chlorobium tepidum).